We begin with the raw amino-acid sequence, 332 residues long: Melanocortin receptor 4 (332 aa).

At 1-43 the chain is on the extracellular side; the sequence is MNSTHHHGMYTSLHLWNRSSHGLHGNASESLGKGHSDGGCYEQ. N-linked (GlcNAc...) asparagine glycans are attached at residues N2, N17, and N26. Disulfide bonds link C40-C279 and C271-C277. A helical transmembrane segment spans residues 44–69; that stretch reads LFVSPEVFVTLGVISLLENILVIVAI. Residues 70 to 81 lie on the Cytoplasmic side of the membrane; it reads AKNKNLHSPMYF. The chain crosses the membrane as a helical span at residues 82–106; the sequence is FICSLAVADMLVSVSNGSETIVITL. 3 residues coordinate Ca(2+): E100, D122, and D126. At 107 to 123 the chain is on the extracellular side; sequence LNSTDTDAQSFTVNIDN. Residues 124–145 traverse the membrane as a helical segment; that stretch reads VIDSVICSSLLASICSLLSIAV. Topologically, residues 146–165 are cytoplasmic; it reads DRYFTIFYALQYHNIMTVRR. A helical transmembrane segment spans residues 166-186; the sequence is VGIIISCIWAACTVSGVLFII. At 187 to 191 the chain is on the extracellular side; the sequence is YSDSS. Residues 192 to 215 traverse the membrane as a helical segment; that stretch reads AVIICLITMFFTMLVLMASLYVHM. Over 216-248 the chain is Cytoplasmic; that stretch reads FLMARLHIKRIAVLPGTGTIRQGANMKGAITLT. A helical membrane pass occupies residues 249-271; sequence ILIGVFVVCWAPFFLHLLFYISC. The Extracellular segment spans residues 272–280; that stretch reads PQNPYCVCF. Residues 281-304 traverse the membrane as a helical segment; that stretch reads MSHFNLYLILIMCNAVIDPLIYAL. Topologically, residues 305–332 are cytoplasmic; the sequence is RSQELRKTFKEIICFYPLGGICELPGRY. C318 is lipidated: S-palmitoyl cysteine.

This sequence belongs to the G-protein coupled receptor 1 family. As to quaternary structure, homodimer; disulfide-linked, also forms higher order oligomers. Interacts with GNAS. Interacts with ATRNL1. Interacts with MGRN1; this interaction competes with GNAS-binding and thus inhibits agonist-induced cAMP production. Interacts with MRAP and MRAP2; these associated factors increase ligand-sensitivity and generation of cAMP. Brain, enriched in the striatum, nucleus accumbens, and periaqueductal gray.

It localises to the cell membrane. Its function is as follows. Hormone receptor that acts as a key component of the leptin-melanocortin pathway at the intersection of homeostatic maintenance of energetic state. Plays a role in regulating food intake: activation by a stimulating hormone such as anorexigenic alpha-melanocyte stimulating hormone (alpha-MSH) inhibits appetite, whereas binding to a natural antagonist like Agouti-related protein/AGRP promotes appetite. G-protein-coupled receptor that activates conventional Galphas signaling leading to induction of anorexogenic signaling in the hypothalamus to result in negative energy balance. Regulates the firing activity of neurons from the hypothalamus by alpha-MSH and AGRP independently of Galphas signaling by ligand-induced coupling of closure of inwardly rectifying potassium channel KCNJ13. In intestinal epithelial cells, plays a role in the inhibition of hepatic glucose production via nesfatin-1/NUCB2 leading to increased cyclic adenosine monophosphate (cAMP) levels and glucagon-like peptide 1 (GLP-1) secretion in the intestinal epithelium. The protein is Melanocortin receptor 4 (Mc4r) of Rattus norvegicus (Rat).